Here is a 437-residue protein sequence, read N- to C-terminus: MKGTGLNNFPQFGVMEGVKILVCGGAIAGPFGATLLGEIGAEVVHFESPKNPDSVRGHYGYSQNHRNQLSMVADMKTPEGLEIFKKLIKWTDIFIESSKGGTYEKMGLTDEVLWEINPRLAIVHVSGFGQTGVPEYIDRASYDAVGQAFSGYMSFNGTPKEAMKVSPYLSDYVTALNTCWTALAAYVHVLRTGKGESVDVAQYESLARILDTRPMEYFTDGKEFPRTGNKDTQAALFSFYTCKDGGEIFIGMNGYGPVRRGYPLIGLPKPGDGDPEIDEILSGWMADTDLGRRLEAAMEKFVSEHTVDEVEKIMLENQIPCLKVYTLKDCAKDPHWKARDIFVEWDDPMMGRVKGLGIINKWKNNPGEIKWGAPLFGENNEEVLKDLGYTEEEIEDFAKRGITASFDFDQTYEIYKLEELFPHYREGFTERWKKEEE.

Residue aspartate 171 is the Nucleophile of the active site.

Belongs to the CoA-transferase III family.

The catalysed reaction is deoxycholoyl-CoA + cholate = choloyl-CoA + deoxycholate. It catalyses the reaction allodeoxycholoyl-CoA + cholate = allodeoxycholate + choloyl-CoA. The enzyme catalyses allocholate + deoxycholoyl-CoA = allocholoyl-CoA + deoxycholate. It carries out the reaction allocholate + allodeoxycholoyl-CoA = allocholoyl-CoA + allodeoxycholate. The catalysed reaction is ursodeoxycholate + deoxycholoyl-CoA = ursodeoxycholoyl-CoA + deoxycholate. It catalyses the reaction allodeoxycholoyl-CoA + ursodeoxycholate = ursodeoxycholoyl-CoA + allodeoxycholate. It functions in the pathway lipid metabolism; bile acid biosynthesis. Functionally, functions in the bile acid 7alpha-dehydroxylation pathway, which forms secondary bile acids via the 7alpha-dehydroxylation of primary bile acids, and is carried out by intestinal anaerobic bacteria. Acts as a bile acid CoA transferase with broad bile acid substrate specificity. Catalyzes the transfer of the CoA moiety of secondary bile acid-CoA compounds to primary bile acids. Can use deoxycholoyl-CoA and allodeoxycholoyl-CoA as bile acid CoA donors and cholate, allocholate and ursodeoxycholate as bile acid CoA acceptors. Shows no activity when lithocholoyl-CoA is used as the CoA donor. The chain is Bile acid CoA-transferase BaiK from Clostridium scindens (strain JCM 10418 / VPI 12708).